The sequence spans 157 residues: Protein Smg (157 aa).

It belongs to the Smg family.

This chain is Protein Smg, found in Serratia proteamaculans (strain 568).